The chain runs to 554 residues: Autophagy-related protein 17 (554 aa).

Low complexity predominate over residues 1–10 (MASSQSSSSS). Positions 1 to 22 (MASSQSSSSSIRPQAGLNEGDH) are disordered. Residues 327 to 353 (VMEIQDRINEMESIFEQVQAQRDALLS) adopt a coiled-coil conformation. Residues 490-529 (LDGGPIGQKPLEEPSGGEYAGAAKAGVSDGSAEGEQIPDL) form a disordered region.

The protein belongs to the ATG17 family.

Its subcellular location is the cytoplasm. The protein resides in the preautophagosomal structure membrane. Autophagy-specific protein that functions in response to autophagy-inducing signals as a scaffold to recruit other ATG proteins to organize pre-autophagosomal structure (PAS) formation. Modulates the timing and magnitude of the autophagy response, such as the size of the sequestering vesicles. Plays particularly a role in pexophagy and nucleophagy. The protein is Autophagy-related protein 17 (atg17) of Penicillium rubens (strain ATCC 28089 / DSM 1075 / NRRL 1951 / Wisconsin 54-1255) (Penicillium chrysogenum).